The following is a 115-amino-acid chain: MRVKKGVKARRRRNRILKLAKGYRGRRKNCYKRANEAVERALDYASRDRMQRKRDFRRLWIVRINAAARTVGLSYSKLIAGLAKAKIGLDRKVLSDMAIADPSGFAAVANIAKAA.

The protein belongs to the bacterial ribosomal protein bL20 family.

In terms of biological role, binds directly to 23S ribosomal RNA and is necessary for the in vitro assembly process of the 50S ribosomal subunit. It is not involved in the protein synthesizing functions of that subunit. The chain is Large ribosomal subunit protein bL20 from Myxococcus xanthus (strain DK1622).